The primary structure comprises 375 residues: LIM domain-binding protein 1 (375 aa).

Disordered regions lie at residues 248–294 (PPAE…TFAL) and 331–375 (DAAN…QASQ). Residues 266 to 282 (SGGSTMSSGGGNTNNSN) show a composition bias toward low complexity. Residues 300-339 (DVMVVGEPTLMGGEFGDEDERLITRLENTQFDAANGIDDE) form the LIM interaction domain (LID) domain.

The protein belongs to the LDB family. As to quaternary structure, forms homodimers and heterodimers. Interacts with the LIM domain of LIM/homeobox factor lhx1/lim1, and with lhx3/lim3 and lhx5/lim5. Activates lhx1/lim1 by binding. The stoichiometry of lhx1/lim1 and ldb1 is important for their function and an excess of ldb1 can inhibit lhx1/lim1 function. When bound to lhx1/lim1, escapes degradation by rnf12. The N-terminus interacts with the N-terminal region of rnf12. In terms of processing, undergoes rnf12-mediated ubiquitin-proteasome-dependent degradation. Ubiquitously expressed in the early gastrula before localizing to the dorsal region of the vegetal hemisphere, which contains the Spemann organizer. Expressed in the CNS, pronephros and tail bud in neurula and tail-bud stage embryos. Expressed in multiple adult tissues including brain, heart, lung, stomach, intestine, liver, spleen, kidney, ovary, muscle and skin.

It localises to the nucleus. Binds to the LIM domain of a wide variety of LIM domain-containing transcription factors. Acts as a coactivator together with otx2 to stimulate lhx1/lim1-mediated activation of the gsc promoter in the Spemann organizer. Acts synergistically with lhx1/lim1 and ssbp in axis formation. This is LIM domain-binding protein 1 (ldb1) from Xenopus laevis (African clawed frog).